The sequence spans 119 residues: DNA-binding protein inhibitor ID-3 (119 aa).

The region spanning 28 to 80 (RGKGPAAEEPLSLLDDMNHCYSRLRELVPGVPRGTQLSQVEILQRVIDYILDL) is the bHLH domain.

Homodimer, and heterodimer with other HLH proteins. Interacts with COPS5 and COPS7A. Interacts with IFI204. Interacts with GATA4 and NKX2-5. Interacts with ANKRD2; both proteins cooperate in myoblast differentiation. Interacts with CLOCK and BMAL1. Expressed abundantly in lung, kidney and adrenal gland, but not in adult brain.

Its subcellular location is the nucleus. Functionally, transcriptional regulator (lacking a basic DNA binding domain) which negatively regulates the basic helix-loop-helix (bHLH) transcription factors by forming heterodimers and inhibiting their DNA binding and transcriptional activity. Implicated in regulating a variety of cellular processes, including cellular growth, senescence, differentiation, apoptosis, angiogenesis, and neoplastic transformation. Involved in myogenesis by inhibiting skeletal muscle and cardiac myocyte differentiation and promoting muscle precursor cells proliferation. Inhibits the binding of E2A-containing protein complexes to muscle creatine kinase E-box enhancer. Regulates the circadian clock by repressing the transcriptional activator activity of the CLOCK-BMAL1 heterodimer. This is DNA-binding protein inhibitor ID-3 (ID3) from Homo sapiens (Human).